Here is a 215-residue protein sequence, read N- to C-terminus: Pyrophosphate-energized proton pump 2 (215 aa).

The next 5 membrane-spanning stretches (helical) occupy residues 16–36, 51–71, 86–106, 136–156, and 164–184; these read VYPL…TFFV, GLIA…YATV, GTNL…IVVI, GLAV…GGII, and LFGT…IVAL.

Belongs to the H(+)-translocating pyrophosphatase (TC 3.A.10) family. Homodimer. It depends on Mg(2+) as a cofactor.

Its subcellular location is the cell inner membrane. It catalyses the reaction diphosphate + H2O + H(+)(in) = 2 phosphate + 2 H(+)(out). In terms of biological role, proton pump that utilizes the energy of pyrophosphate hydrolysis as the driving force for proton movement across the membrane. Generates a proton motive force. This Rhizobium leguminosarum bv. trifolii protein is Pyrophosphate-energized proton pump 2 (hppA2).